The chain runs to 336 residues: Polyadenylate-binding protein-interacting protein 12 (336 aa).

The disordered stretch occupies residues 14 to 47; the sequence is EAGGLISPSPPSSVTSQESGASSNNDHGGNGIHD. Over residues 25-40 the composition is skewed to polar residues; that stretch reads SSVTSQESGASSNNDH. The short motif at 75 to 85 is the PAM2-like element; the sequence is KLNPMAKEFIP. A Bipartite nuclear localization signal motif is present at residues 122 to 134; it reads RRKKSFGQQGKRR. 2 consecutive RRM domains span residues 150–225 and 247–323; these read RTVY…PSKT and RTIY…PSKT.

In terms of assembly, interacts with MPC. Expressed in roots, leaves, stems, flowers and siliques. Detected in flowers only in growing organs: gynoecium, petals, stamenal filaments, anther walls and ovules.

The protein resides in the nucleus. Functionally, binds nucleotic acids in vitro. This Arabidopsis thaliana (Mouse-ear cress) protein is Polyadenylate-binding protein-interacting protein 12 (CID12).